Consider the following 49-residue polypeptide: uncharacterized protein (49 aa).

This is an uncharacterized protein from Treponema pallidum (strain Nichols).